The sequence spans 302 residues: Nucleotide-binding protein STH186 (302 aa).

Residue 15 to 22 participates in ATP binding; the sequence is GMSGAGKT. 66–69 serves as a coordination point for GTP; the sequence is DIRG.

It belongs to the RapZ-like family.

Functionally, displays ATPase and GTPase activities. The protein is Nucleotide-binding protein STH186 of Symbiobacterium thermophilum (strain DSM 24528 / JCM 14929 / IAM 14863 / T).